The primary structure comprises 375 residues: Succinyl-diaminopimelate desuccinylase (375 aa).

H66 serves as a coordination point for Zn(2+). D68 is an active-site residue. Zn(2+) is bound at residue D99. Catalysis depends on E133, which acts as the Proton acceptor. Residues E134, E162, and H348 each coordinate Zn(2+).

This sequence belongs to the peptidase M20A family. DapE subfamily. As to quaternary structure, homodimer. Zn(2+) serves as cofactor. It depends on Co(2+) as a cofactor.

It catalyses the reaction N-succinyl-(2S,6S)-2,6-diaminopimelate + H2O = (2S,6S)-2,6-diaminopimelate + succinate. It functions in the pathway amino-acid biosynthesis; L-lysine biosynthesis via DAP pathway; LL-2,6-diaminopimelate from (S)-tetrahydrodipicolinate (succinylase route): step 3/3. Its function is as follows. Catalyzes the hydrolysis of N-succinyl-L,L-diaminopimelic acid (SDAP), forming succinate and LL-2,6-diaminopimelate (DAP), an intermediate involved in the bacterial biosynthesis of lysine and meso-diaminopimelic acid, an essential component of bacterial cell walls. The sequence is that of Succinyl-diaminopimelate desuccinylase from Shigella sonnei (strain Ss046).